Reading from the N-terminus, the 193-residue chain is A-type ATP synthase subunit E (193 aa).

The protein belongs to the V-ATPase E subunit family. Has multiple subunits with at least A(3), B(3), C, D, E, F, H, I and proteolipid K(x).

The protein resides in the cell membrane. Component of the A-type ATP synthase that produces ATP from ADP in the presence of a proton gradient across the membrane. The sequence is that of A-type ATP synthase subunit E from Haloquadratum walsbyi (strain DSM 16790 / HBSQ001).